The chain runs to 422 residues: Acyl-[acyl-carrier-protein] desaturase 6, chloroplastic (422 aa).

The N-terminal 46 residues, 1–46 (MAATATMAMPLANRLRCKPNTNSSSPSRTLFGRRVTMISSSRWMCR), are a transit peptide targeting the chloroplast. The Fe cation site is built by glutamate 154, glutamate 192, histidine 195, glutamate 245, glutamate 280, and histidine 283.

It belongs to the fatty acid desaturase type 2 family. In terms of assembly, homodimer. Fe(2+) is required as a cofactor.

It localises to the plastid. It is found in the chloroplast. Its pathway is lipid metabolism; fatty acid metabolism. Functionally, introduces a cis double bond in the acyl chain of an acyl-[acyl-carrier protein]. This is Acyl-[acyl-carrier-protein] desaturase 6, chloroplastic from Oryza sativa subsp. indica (Rice).